Reading from the N-terminus, the 255-residue chain is ATP synthase subunit a (255 aa).

Residues 1–7 (MMFNNII) constitute a propeptide, removed in mature form. Helical transmembrane passes span 35-55 (FGFY…LITY), 91-111 (YFPF…LGLI), 120-140 (HFIL…ILGF), 147-167 (FFSL…LVLI), 177-197 (VSLG…LVIL), and 208-228 (GIFY…FSGL).

This sequence belongs to the ATPase A chain family. F-type ATPases have 2 components, CF(1) - the catalytic core - and CF(0) - the membrane proton channel. CF(1) has five subunits: alpha(3), beta(3), gamma(1), delta(1), epsilon(1). CF(0) has three main subunits: a, b and c.

The protein resides in the mitochondrion inner membrane. In terms of biological role, mitochondrial membrane ATP synthase (F(1)F(0) ATP synthase or Complex V) produces ATP from ADP in the presence of a proton gradient across the membrane which is generated by electron transport complexes of the respiratory chain. F-type ATPases consist of two structural domains, F(1) - containing the extramembraneous catalytic core and F(0) - containing the membrane proton channel, linked together by a central stalk and a peripheral stalk. During catalysis, ATP synthesis in the catalytic domain of F(1) is coupled via a rotary mechanism of the central stalk subunits to proton translocation. Key component of the proton channel; it may play a direct role in the translocation of protons across the membrane. The chain is ATP synthase subunit a (ATP6) from Trichophyton rubrum (Athlete's foot fungus).